The sequence spans 417 residues: Autophagy-related protein 18 (417 aa).

4 WD repeats span residues 1–36 (MSMN…KSYE), 76–114 (ELTF…LVYT), 185–225 (AHKS…KLYQ), and 230–269 (SMPS…GLSK). Positions 226-230 (FRRGS) match the L/FRRG motif motif. Residues 267–300 (LSKTSSPSRKLESSRGSGDESAVESASSEMSSRK) are disordered. Positions 285 to 296 (DESAVESASSEM) are enriched in low complexity. 2 WD repeats span residues 300 to 346 (KHNG…AWIK) and 355 to 395 (GGSG…GGEG).

Belongs to the WD repeat PROPPIN family. Component of the PI(3,5)P2 regulatory complex.

It is found in the preautophagosomal structure membrane. The protein localises to the vacuole membrane. It localises to the endosome membrane. Functionally, the PI(3,5)P2 regulatory complex regulates both the synthesis and turnover of phosphatidylinositol 3,5-bisphosphate (PtdIns(3,5)P2). Necessary for proper vacuole morphology. Plays an important role in osmotically-induced vacuole fragmentation. Required for cytoplasm to vacuole transport (Cvt) vesicle formation, pexophagy and starvation-induced autophagy. Involved in correct ATG9 trafficking to the pre-autophagosomal structure. Might also be involved in premeiotic DNA replication. The protein is Autophagy-related protein 18 (ATG18) of Coccidioides immitis (strain RS) (Valley fever fungus).